A 412-amino-acid chain; its full sequence is MAFLCQRDSYAREFTTTVVSCSPAELQTDASGGKKEVLSGFHVVLEDTLLFPEGGGQPDDRGTINDISVLRVTRRGAQADHFTESPLSPGSQVQVRVDWERRFDHMQQHSGQHLITAVADLLFGLKTTSWELGRLRSVIELDSPSVTAEQVAAIEQSVNQKIRDRLPVSVRELSLDDPEVEQVRGRGLPDDHAGPIRVVTIEGVDSNMCCGTHVSNLSDLQVIKILGTEKGKKNKSNLIFLAGNRVLKWMERSHGSEKALTSLLKCGVEDHVEAVKKLQNATKLLQKNNLNLLRDLAVHTAHSLRSSPAWGGVVTLHRKEGDSEFMNIIANEIGSEETLLFLTVGDEKGAGLFLLAGPAEAVETLGPRVAEVLEGKGAGKKGRFQGKATKMSRRAEAQALLQDYVSTQSAEE.

Positions 109 and 113 each coordinate Zn(2+). Ser-174 is modified (phosphoserine). 2 residues coordinate Zn(2+): Cys-209 and His-213.

Belongs to the class-II aminoacyl-tRNA synthetase family. Alax-L subfamily. Zn(2+) is required as a cofactor.

The protein localises to the cytoplasm. In terms of biological role, functions in trans to edit the amino acid moiety from incorrectly charged Ser-tRNA(Ala). In Mus musculus (Mouse), this protein is Alanyl-tRNA editing protein Aarsd1 (Aarsd1).